The primary structure comprises 409 residues: DNA double-strand break repair protein Mre11 (409 aa).

Residues aspartate 9, histidine 11, aspartate 50, and glutamate 85 each contribute to the Mn(2+) site. The active-site Proton donor is histidine 86. Histidine 170, histidine 199, and histidine 201 together coordinate Mn(2+).

This sequence belongs to the MRE11/RAD32 family. As to quaternary structure, homodimer. Forms a heterotetramer composed of two Mre11 subunits and two Rad50 subunits. Mn(2+) is required as a cofactor.

With respect to regulation, nuclease activity is regulated by Rad50. Functionally, part of the Rad50/Mre11 complex, which is involved in the early steps of DNA double-strand break (DSB) repair. The complex may facilitate opening of the processed DNA ends to aid in the recruitment of HerA and NurA. Mre11 binds to DSB ends and has both double-stranded 3'-5' exonuclease activity and single-stranded endonuclease activity. The protein is DNA double-strand break repair protein Mre11 of Aeropyrum pernix (strain ATCC 700893 / DSM 11879 / JCM 9820 / NBRC 100138 / K1).